Reading from the N-terminus, the 369-residue chain is Glutamate 5-kinase (369 aa).

Residue K9 participates in ATP binding. The substrate site is built by S49, D136, and N148. ATP contacts are provided by residues T168–D169 and T210–K216. Positions Q275–W355 constitute a PUA domain.

It belongs to the glutamate 5-kinase family.

Its subcellular location is the cytoplasm. It carries out the reaction L-glutamate + ATP = L-glutamyl 5-phosphate + ADP. It participates in amino-acid biosynthesis; L-proline biosynthesis; L-glutamate 5-semialdehyde from L-glutamate: step 1/2. In terms of biological role, catalyzes the transfer of a phosphate group to glutamate to form L-glutamate 5-phosphate. The protein is Glutamate 5-kinase of Streptococcus pneumoniae (strain Hungary19A-6).